A 490-amino-acid polypeptide reads, in one-letter code: Subtilisin-like protease 8 (490 aa).

The first 26 residues, 1 to 26 (MKGLLSLSVLPVLAYASPMIVDSIHQ), serve as a signal peptide directing secretion. Positions 27-134 (NAAPILSSTN…YIERDSEVHT (108 aa)) are excised as a propeptide. In terms of domain architecture, Inhibitor I9 spans 43–134 (SYIVVFKKGV…YIERDSEVHT (92 aa)). Residues 144 to 450 (PWGLARISHR…GGSDDYKKII (307 aa)) enclose the Peptidase S8 domain. Residues Asp180 and His212 each act as charge relay system in the active site. Asn282 carries N-linked (GlcNAc...) asparagine glycosylation. Residue Ser378 is the Charge relay system of the active site. Asn456 carries N-linked (GlcNAc...) asparagine glycosylation.

The protein belongs to the peptidase S8 family.

The protein localises to the secreted. Secreted subtilisin-like serine protease with keratinolytic activity that contributes to pathogenicity. This chain is Subtilisin-like protease 8 (SUB8), found in Trichophyton verrucosum (strain HKI 0517).